The primary structure comprises 271 residues: L-aspartate dehydrogenase (271 aa).

NAD(+) contacts are provided by A124 and N192. H222 is an active-site residue.

Belongs to the L-aspartate dehydrogenase family.

The catalysed reaction is L-aspartate + NADP(+) + H2O = oxaloacetate + NH4(+) + NADPH + H(+). The enzyme catalyses L-aspartate + NAD(+) + H2O = oxaloacetate + NH4(+) + NADH + H(+). The protein operates within cofactor biosynthesis; NAD(+) biosynthesis; iminoaspartate from L-aspartate (dehydrogenase route): step 1/1. Specifically catalyzes the NAD or NADP-dependent dehydrogenation of L-aspartate to iminoaspartate. In Methanosarcina barkeri (strain Fusaro / DSM 804), this protein is L-aspartate dehydrogenase.